The chain runs to 149 residues: MNQVVIYTDGACKGNPGPGGWGVVLRSGALEKELFGGELGTTNNRMELLAVIEALGALKRPCAVTLYLDSQYVRKGITEWIQGWKKKGWRTASGQPVKNVELWKRLDDLVAGGGHVIDWRWVKGHAGDPGNERADALANKGVDKALGRA.

The RNase H type-1 domain maps to 1-143; sequence MNQVVIYTDG…ADALANKGVD (143 aa). Residues aspartate 9, glutamate 47, aspartate 69, and aspartate 135 each coordinate Mg(2+).

Belongs to the RNase H family. Monomer. Mg(2+) is required as a cofactor.

Its subcellular location is the cytoplasm. The enzyme catalyses Endonucleolytic cleavage to 5'-phosphomonoester.. In terms of biological role, endonuclease that specifically degrades the RNA of RNA-DNA hybrids. The protein is Ribonuclease H of Paracidovorax citrulli (strain AAC00-1) (Acidovorax citrulli).